Here is a 315-residue protein sequence, read N- to C-terminus: Prephenate dehydratase (315 aa).

Positions Arg3–Arg190 constitute a Prephenate dehydratase domain. In terms of domain architecture, ACT spans Ser204–Pro281.

Homodimer.

The enzyme catalyses prephenate + H(+) = 3-phenylpyruvate + CO2 + H2O. The protein operates within amino-acid biosynthesis; L-phenylalanine biosynthesis; phenylpyruvate from prephenate: step 1/1. This chain is Prephenate dehydratase (pheA), found in Mycobacterium sp. (strain JLS).